A 446-amino-acid polypeptide reads, in one-letter code: N-succinylarginine dihydrolase (446 aa).

Substrate is bound by residues 19 to 28 (AGLSFGNVAS), asparagine 110, and 137 to 138 (HR). The active site involves glutamate 174. Arginine 213 lines the substrate pocket. Histidine 249 is a catalytic residue. 2 residues coordinate substrate: aspartate 251 and asparagine 364. Cysteine 370 (nucleophile) is an active-site residue.

This sequence belongs to the succinylarginine dihydrolase family. In terms of assembly, homodimer.

It catalyses the reaction N(2)-succinyl-L-arginine + 2 H2O + 2 H(+) = N(2)-succinyl-L-ornithine + 2 NH4(+) + CO2. The protein operates within amino-acid degradation; L-arginine degradation via AST pathway; L-glutamate and succinate from L-arginine: step 2/5. In terms of biological role, catalyzes the hydrolysis of N(2)-succinylarginine into N(2)-succinylornithine, ammonia and CO(2). The polypeptide is N-succinylarginine dihydrolase (Burkholderia mallei (strain NCTC 10247)).